A 391-amino-acid polypeptide reads, in one-letter code: Serine protease 7 (391 aa).

An N-terminal signal peptide occupies residues 1 to 27 (MKSTRKVVGIFLATCLLPFTVLQNVAA). The propeptide at 28–136 (QGSCRNPNQK…KCGPHSFSNK (109 aa)) is activation peptide. One can recognise a Clip domain in the interval 30 to 84 (SCRNPNQKQGQCLSIYDCQSLLSVIQQSYVSPEDRTFLRNSQCLDGVGRQPYVCC). 3 disulfide bridges follow: cysteine 31–cysteine 83, cysteine 41–cysteine 72, and cysteine 47–cysteine 84. The segment at 91–121 (GSQEATSAAPPPTTTSSSSRGQDGQAGLGNL) is disordered. 5 disulfides stabilise this stretch: cysteine 128–cysteine 264, cysteine 167–cysteine 183, cysteine 211–cysteine 216, cysteine 310–cysteine 327, and cysteine 337–cysteine 366. One can recognise a Peptidase S1 domain in the interval 137-390 (VYNGNDTAID…YMDWIVETIR (254 aa)). An N-linked (GlcNAc...) asparagine glycan is attached at asparagine 141. Residue histidine 182 is the Charge relay system of the active site. Positions 202, 204, 207, and 210 each coordinate Ca(2+). Aspartate 244 (charge relay system) is an active-site residue. Serine 341 serves as the catalytic Charge relay system.

The protein belongs to the peptidase S1 family. CLIP subfamily. In terms of assembly, interacts with Spn27A.

It localises to the secreted. Its function is as follows. Serine protease that, by cleaving and activating prophenoloxidase (PPO1) after immune challenge, plays an essential role in the melanization immune response to septic wounding. May function in diverse Hayan-dependent PPO1-activating cascades that are negatively controlled by different serpin proteins; Spn27A in the hemolymph and Spn77BA in the trachea. Important for the innate immune response to fungi. Regulation of melanization and PPO1 activation appears to be largely independent of the Toll signaling pathway. The polypeptide is Serine protease 7 (Drosophila melanogaster (Fruit fly)).